We begin with the raw amino-acid sequence, 452 residues long: Phosphoglucosamine mutase (452 aa).

Catalysis depends on Ser103, which acts as the Phosphoserine intermediate. 4 residues coordinate Mg(2+): Ser103, Asp243, Asp245, and Asp247. At Ser103 the chain carries Phosphoserine.

This sequence belongs to the phosphohexose mutase family. It depends on Mg(2+) as a cofactor. Activated by phosphorylation.

The catalysed reaction is alpha-D-glucosamine 1-phosphate = D-glucosamine 6-phosphate. Catalyzes the conversion of glucosamine-6-phosphate to glucosamine-1-phosphate. The protein is Phosphoglucosamine mutase of Limosilactobacillus fermentum (strain NBRC 3956 / LMG 18251) (Lactobacillus fermentum).